The following is a 193-amino-acid chain: Holliday junction branch migration complex subunit RuvA (193 aa).

The tract at residues 1–64 (MIGRIAGVLL…EDAHLLYGFG (64 aa)) is domain I. Residues 65–139 (TAEERSTFRE…GKIGADLGAM (75 aa)) are domain II. The segment at 139-143 (MAGAA) is flexible linker. Positions 144–193 (SASDHASDILNALLALGYSEKEALTAVKNVPAGTGVSEGIKLALKALSKG) are domain III.

It belongs to the RuvA family. Homotetramer. Forms an RuvA(8)-RuvB(12)-Holliday junction (HJ) complex. HJ DNA is sandwiched between 2 RuvA tetramers; dsDNA enters through RuvA and exits via RuvB. An RuvB hexamer assembles on each DNA strand where it exits the tetramer. Each RuvB hexamer is contacted by two RuvA subunits (via domain III) on 2 adjacent RuvB subunits; this complex drives branch migration. In the full resolvosome a probable DNA-RuvA(4)-RuvB(12)-RuvC(2) complex forms which resolves the HJ.

The protein resides in the cytoplasm. Its function is as follows. The RuvA-RuvB-RuvC complex processes Holliday junction (HJ) DNA during genetic recombination and DNA repair, while the RuvA-RuvB complex plays an important role in the rescue of blocked DNA replication forks via replication fork reversal (RFR). RuvA specifically binds to HJ cruciform DNA, conferring on it an open structure. The RuvB hexamer acts as an ATP-dependent pump, pulling dsDNA into and through the RuvAB complex. HJ branch migration allows RuvC to scan DNA until it finds its consensus sequence, where it cleaves and resolves the cruciform DNA. The chain is Holliday junction branch migration complex subunit RuvA from Paraburkholderia phytofirmans (strain DSM 17436 / LMG 22146 / PsJN) (Burkholderia phytofirmans).